A 330-amino-acid polypeptide reads, in one-letter code: Aspartate--ammonia ligase (330 aa).

The protein belongs to the class-II aminoacyl-tRNA synthetase family. AsnA subfamily.

It localises to the cytoplasm. The catalysed reaction is L-aspartate + NH4(+) + ATP = L-asparagine + AMP + diphosphate + H(+). It functions in the pathway amino-acid biosynthesis; L-asparagine biosynthesis; L-asparagine from L-aspartate (ammonia route): step 1/1. The polypeptide is Aspartate--ammonia ligase (Treponema pallidum (strain Nichols)).